Here is a 247-residue protein sequence, read N- to C-terminus: 7-carboxy-7-deazaguanine synthase (247 aa).

Substrate is bound by residues 15–17 (IQG) and Arg30. The region spanning 21–247 (LVGRRQIFVR…PQMHRALGLR (227 aa)) is the Radical SAM core domain. [4Fe-4S] cluster contacts are provided by Cys34, Cys38, and Cys41. Position 43 (Thr43) interacts with Mg(2+). Residue Thr78 participates in substrate binding. Position 80 (Gly80) interacts with S-adenosyl-L-methionine.

It belongs to the radical SAM superfamily. 7-carboxy-7-deazaguanine synthase family. In terms of assembly, homodimer. [4Fe-4S] cluster serves as cofactor. S-adenosyl-L-methionine is required as a cofactor. Requires Mg(2+) as cofactor.

It carries out the reaction 6-carboxy-5,6,7,8-tetrahydropterin + H(+) = 7-carboxy-7-deazaguanine + NH4(+). The protein operates within purine metabolism; 7-cyano-7-deazaguanine biosynthesis. Functionally, catalyzes the complex heterocyclic radical-mediated conversion of 6-carboxy-5,6,7,8-tetrahydropterin (CPH4) to 7-carboxy-7-deazaguanine (CDG), a step common to the biosynthetic pathways of all 7-deazapurine-containing compounds. The sequence is that of 7-carboxy-7-deazaguanine synthase from Methanothermobacter thermautotrophicus (strain ATCC 29096 / DSM 1053 / JCM 10044 / NBRC 100330 / Delta H) (Methanobacterium thermoautotrophicum).